Consider the following 951-residue polypeptide: Pheromone-regulated membrane protein 10 (951 aa).

3 stretches are compositionally biased toward polar residues: residues 1-10, 68-84, and 92-104; these read MSSSYGNNGD, GGST…NVGS, and RTAS…NRRQ. Disordered regions lie at residues 1–293, 313–366, and 433–487; these read MSSS…EDPI, AGKS…TMVS, and NDSS…LPNF. Acidic residues predominate over residues 126-135; it reads DDDDEEEEEH. The span at 219–234 shows a compositional bias: basic and acidic residues; sequence PHQETNDGRNSAESHS. Composition is skewed to polar residues over residues 318–332, 354–366, and 468–484; these read PGTQ…SSEH, PFNQ…TMVS, and SQTN…SMNL. 10 helical membrane-spanning segments follow: residues 635–655, 657–677, 687–707, 711–731, 753–773, 786–806, 811–831, 841–861, 863–883, and 918–938; these read WVSV…AFGG, WINM…QFIV, VFEV…GSIP, ICFG…YIIL, IIYS…FGWI, NISP…LGLI, WTQL…TYFS, FTSA…SRIW, GFAV…GVAS, and VTMI…TLFI.

It belongs to the ThrE exporter (TC 2.A.79) family.

The protein localises to the membrane. The protein is Pheromone-regulated membrane protein 10 of Kluyveromyces lactis (strain ATCC 8585 / CBS 2359 / DSM 70799 / NBRC 1267 / NRRL Y-1140 / WM37) (Yeast).